We begin with the raw amino-acid sequence, 402 residues long: NADH-quinone oxidoreductase subunit D (402 aa).

This sequence belongs to the complex I 49 kDa subunit family. As to quaternary structure, NDH-1 is composed of 14 different subunits. Subunits NuoB, C, D, E, F, and G constitute the peripheral sector of the complex.

Its subcellular location is the cell inner membrane. It carries out the reaction a quinone + NADH + 5 H(+)(in) = a quinol + NAD(+) + 4 H(+)(out). Functionally, NDH-1 shuttles electrons from NADH, via FMN and iron-sulfur (Fe-S) centers, to quinones in the respiratory chain. The immediate electron acceptor for the enzyme in this species is believed to be ubiquinone. Couples the redox reaction to proton translocation (for every two electrons transferred, four hydrogen ions are translocated across the cytoplasmic membrane), and thus conserves the redox energy in a proton gradient. This chain is NADH-quinone oxidoreductase subunit D, found in Rhodopseudomonas palustris (strain ATCC BAA-98 / CGA009).